The sequence spans 491 residues: Chromosomal replication initiator protein DnaA (491 aa).

The segment at methionine 1–leucine 69 is domain I, interacts with DnaA modulators. The interval leucine 69 to leucine 154 is domain II. The interval proline 155–serine 371 is domain III, AAA+ region. Residues glycine 199, glycine 201, lysine 202, and threonine 203 each coordinate ATP. The tract at residues lysine 372–arginine 491 is domain IV, binds dsDNA.

This sequence belongs to the DnaA family. As to quaternary structure, oligomerizes as a right-handed, spiral filament on DNA at oriC.

The protein localises to the cytoplasm. In terms of biological role, plays an essential role in the initiation and regulation of chromosomal replication. ATP-DnaA binds to the origin of replication (oriC) to initiate formation of the DNA replication initiation complex once per cell cycle. Binds the DnaA box (a 9 base pair repeat at the origin) and separates the double-stranded (ds)DNA. Forms a right-handed helical filament on oriC DNA; dsDNA binds to the exterior of the filament while single-stranded (ss)DNA is stabiized in the filament's interior. The ATP-DnaA-oriC complex binds and stabilizes one strand of the AT-rich DNA unwinding element (DUE), permitting loading of DNA polymerase. After initiation quickly degrades to an ADP-DnaA complex that is not apt for DNA replication. Binds acidic phospholipids. This is Chromosomal replication initiator protein DnaA from Francisella tularensis subsp. novicida (strain U112).